We begin with the raw amino-acid sequence, 565 residues long: NAD-dependent malic enzyme (565 aa).

Catalysis depends on Tyr103, which acts as the Proton donor. Lys177 (proton acceptor) is an active-site residue. A divalent metal cation-binding residues include Glu248, Asp249, and Asp272. Asp272 and Asn419 together coordinate NAD(+). Ser445 carries the phosphoserine modification.

This sequence belongs to the malic enzymes family. The cofactor is Mg(2+). Mn(2+) serves as cofactor.

It carries out the reaction (S)-malate + NAD(+) = pyruvate + CO2 + NADH. The catalysed reaction is oxaloacetate + H(+) = pyruvate + CO2. The polypeptide is NAD-dependent malic enzyme (mae2) (Schizosaccharomyces pombe (strain 972 / ATCC 24843) (Fission yeast)).